The sequence spans 329 residues: MQGSVTEFLKPRLVDIEQVSSTHAKVTLEPLERGFGHTLGNALRRILLSSMPGCAVTEVEIDGVLHEYSTKEGVQEDILEILLNLKGLAVRVQGKDEVILTLNKSGIGPVTAADITHDGDVEIVKPQHVICHLTDENAAISMRIKVQRGRGYVPASARIHSEEDERPIGRLLVDACYSPVERIAYNVEAARVEQRTDLDKLVIEMETNGTIDPEEAIRRAATILAEQLEAFVDLRDVRQPEVKEEKPEFDPILLRPVDDLELTVRSANCLKAEAIHYIGDLVQRTEVELLKTPNLGKKSLTEIKDVLASRGLSLGMRLENWPPASIADE.

Residues 1–235 form an alpha N-terminal domain (alpha-NTD) region; sequence MQGSVTEFLK…EQLEAFVDLR (235 aa). An alpha C-terminal domain (alpha-CTD) region spans residues 249–329; that stretch reads FDPILLRPVD…NWPPASIADE (81 aa).

It belongs to the RNA polymerase alpha chain family. Homodimer. The RNAP catalytic core consists of 2 alpha, 1 beta, 1 beta' and 1 omega subunit. When a sigma factor is associated with the core the holoenzyme is formed, which can initiate transcription.

It carries out the reaction RNA(n) + a ribonucleoside 5'-triphosphate = RNA(n+1) + diphosphate. DNA-dependent RNA polymerase catalyzes the transcription of DNA into RNA using the four ribonucleoside triphosphates as substrates. The sequence is that of DNA-directed RNA polymerase subunit alpha from Enterobacter sp. (strain 638).